A 204-amino-acid chain; its full sequence is MRADESGPERESREPTHIPGAEPELGGEPTPRGEPGPGFEPGPGGEPAPSRAPFRSRLRKGVLAAVALGGVLGGSARYALGLTFPTPRGTFPVTTFAVNVSGAFLLALLLVYVLEIWPPTRYVRPFAAVGFLGSFTTFSTWMVDTDRLLGHGHYAVAAFNVFGSLFAGLAATGLGLAIGRMALARRVRLAARHGRARRYGWWVR.

Over residues 1–16 the composition is skewed to basic and acidic residues; sequence MRADESGPERESREPT. Positions 1-53 are disordered; sequence MRADESGPERESREPTHIPGAEPELGGEPTPRGEPGPGFEPGPGGEPAPSRAP. Over residues 32–46 the composition is skewed to pro residues; the sequence is RGEPGPGFEPGPGGE. Helical transmembrane passes span 62 to 82, 96 to 116, 125 to 145, and 158 to 178; these read VLAAVALGGVLGGSARYALGL, FAVNVSGAFLLALLLVYVLEI, PFAAVGFLGSFTTFSTWMVDT, and AFNVFGSLFAGLAATGLGLAI. Residues Gly133 and Thr136 each coordinate Na(+).

Belongs to the fluoride channel Fluc/FEX (TC 1.A.43) family.

It is found in the cell membrane. The catalysed reaction is fluoride(in) = fluoride(out). Its activity is regulated as follows. Na(+) is not transported, but it plays an essential structural role and its presence is essential for fluoride channel function. Fluoride-specific ion channel. Important for reducing fluoride concentration in the cell, thus reducing its toxicity. The polypeptide is Fluoride-specific ion channel FluC 3 (Streptomyces avermitilis (strain ATCC 31267 / DSM 46492 / JCM 5070 / NBRC 14893 / NCIMB 12804 / NRRL 8165 / MA-4680)).